The following is a 397-amino-acid chain: CCA-adding enzyme (397 aa).

ATP is bound by residues Gly26 and Arg29. Residues Gly26 and Arg29 each contribute to the CTP site. Residues Asp39 and Asp41 each coordinate Mg(2+). 5 residues coordinate ATP: Arg110, Asp153, Arg156, Arg159, and Arg162. Arg110, Asp153, Arg156, Arg159, and Arg162 together coordinate CTP.

The protein belongs to the tRNA nucleotidyltransferase/poly(A) polymerase family. Bacterial CCA-adding enzyme type 3 subfamily. Homodimer. Mg(2+) is required as a cofactor.

The catalysed reaction is a tRNA precursor + 2 CTP + ATP = a tRNA with a 3' CCA end + 3 diphosphate. The enzyme catalyses a tRNA with a 3' CCA end + 2 CTP + ATP = a tRNA with a 3' CCACCA end + 3 diphosphate. In terms of biological role, catalyzes the addition and repair of the essential 3'-terminal CCA sequence in tRNAs without using a nucleic acid template. Adds these three nucleotides in the order of C, C, and A to the tRNA nucleotide-73, using CTP and ATP as substrates and producing inorganic pyrophosphate. tRNA 3'-terminal CCA addition is required both for tRNA processing and repair. Also involved in tRNA surveillance by mediating tandem CCA addition to generate a CCACCA at the 3' terminus of unstable tRNAs. While stable tRNAs receive only 3'-terminal CCA, unstable tRNAs are marked with CCACCA and rapidly degraded. The polypeptide is CCA-adding enzyme (Bacillus cereus (strain 03BB102)).